The chain runs to 181 residues: Protein Syd (181 aa).

It belongs to the Syd family.

It localises to the cell inner membrane. In terms of biological role, interacts with the SecY protein in vivo. May bind preferentially to an uncomplexed state of SecY, thus functioning either as a chelating agent for excess SecY in the cell or as a regulatory factor that negatively controls the translocase function. This chain is Protein Syd, found in Escherichia fergusonii (strain ATCC 35469 / DSM 13698 / CCUG 18766 / IAM 14443 / JCM 21226 / LMG 7866 / NBRC 102419 / NCTC 12128 / CDC 0568-73).